Consider the following 571-residue polypeptide: Gag-Pro polyprotein (571 aa).

Gly2 is lipidated: N-myristoyl glycine; by host. The PPXY motif motif lies at 100–103; sequence PPPY. Repeats lie at residues 342–362 and 367–387; these read PPGP…CPTK and PPGP…CPTL. 2 consecutive CCHC-type zinc fingers follow at residues 345–362 and 370–387; these read PCYR…CPTK and PCPI…CPTL. Thr453 functions as the Protease; shared with dimeric partner in the catalytic mechanism.

Homodimer; the homodimers are part of the immature particles. Interacts with human TSG101 and NEDD4; these interactions are essential for budding and release of viral particles. In terms of assembly, homodimer; further assembles as homohexamers. Post-translationally, specific enzymatic cleavages by the viral protease yield mature proteins. The polyprotein is cleaved during and after budding, this process is termed maturation. The protease is autoproteolytically processed at its N- and C-termini. In terms of processing, myristoylated. Myristoylation of the matrix (MA) domain mediates the transport and binding of Gag polyproteins to the host plasma membrane and is required for the assembly of viral particles.

Its subcellular location is the virion. In terms of biological role, the matrix domain targets Gag, Gag-Pro and Gag-Pro-Pol polyproteins to the plasma membrane via a multipartite membrane binding signal, that includes its myristoylated N-terminus. Its function is as follows. Matrix protein. Forms the spherical core of the virus that encapsulates the genomic RNA-nucleocapsid complex. Functionally, binds strongly to viral nucleic acids and promote their aggregation. Also destabilizes the nucleic acids duplexes via highly structured zinc-binding motifs. In terms of biological role, the aspartyl protease mediates proteolytic cleavages of Gag and Gag-Pol polyproteins during or shortly after the release of the virion from the plasma membrane. Cleavages take place as an ordered, step-wise cascade to yield mature proteins. This process is called maturation. Displays maximal activity during the budding process just prior to particle release from the cell. This chain is Gag-Pro polyprotein, found in Bovine leukemia virus (isolate Japanese BLV-1) (BLV).